Here is a 101-residue protein sequence, read N- to C-terminus: NADH-quinone oxidoreductase subunit K (101 aa).

The next 3 helical transmembrane spans lie at 4–24, 30–50, and 61–81; these read LSHYLILGSLLFAISVVGIFL, IVLLMAIELMLLAVNLNFIAF, and VFVFFILTVAAAESAIGLAIL.

Belongs to the complex I subunit 4L family. NDH-1 is composed of 14 different subunits. Subunits NuoA, H, J, K, L, M, N constitute the membrane sector of the complex.

It localises to the cell inner membrane. It carries out the reaction a quinone + NADH + 5 H(+)(in) = a quinol + NAD(+) + 4 H(+)(out). NDH-1 shuttles electrons from NADH, via FMN and iron-sulfur (Fe-S) centers, to quinones in the respiratory chain. The immediate electron acceptor for the enzyme in this species is believed to be ubiquinone. Couples the redox reaction to proton translocation (for every two electrons transferred, four hydrogen ions are translocated across the cytoplasmic membrane), and thus conserves the redox energy in a proton gradient. This Methylovorus glucosotrophus (strain SIP3-4) protein is NADH-quinone oxidoreductase subunit K.